A 236-amino-acid polypeptide reads, in one-letter code: Phosphoribosylaminoimidazole-succinocarboxamide synthase (236 aa).

Belongs to the SAICAR synthetase family.

It carries out the reaction 5-amino-1-(5-phospho-D-ribosyl)imidazole-4-carboxylate + L-aspartate + ATP = (2S)-2-[5-amino-1-(5-phospho-beta-D-ribosyl)imidazole-4-carboxamido]succinate + ADP + phosphate + 2 H(+). It functions in the pathway purine metabolism; IMP biosynthesis via de novo pathway; 5-amino-1-(5-phospho-D-ribosyl)imidazole-4-carboxamide from 5-amino-1-(5-phospho-D-ribosyl)imidazole-4-carboxylate: step 1/2. The polypeptide is Phosphoribosylaminoimidazole-succinocarboxamide synthase (Campylobacter jejuni subsp. jejuni serotype O:2 (strain ATCC 700819 / NCTC 11168)).